The chain runs to 58 residues: Large ribosomal subunit protein bL32 (58 aa).

This sequence belongs to the bacterial ribosomal protein bL32 family.

This Ligilactobacillus salivarius (strain UCC118) (Lactobacillus salivarius) protein is Large ribosomal subunit protein bL32.